An 82-amino-acid chain; its full sequence is ATP synthase subunit c (82 aa).

2 helical membrane passes run 7 to 27 and 53 to 73; these read LVAL…CIGI and FLLA…AMLF.

It belongs to the ATPase C chain family. In terms of assembly, F-type ATPases have 2 components, F(1) - the catalytic core - and F(0) - the membrane proton channel. F(1) has five subunits: alpha(3), beta(3), gamma(1), delta(1), epsilon(1). F(0) has three main subunits: a(1), b(2) and c(10-14). The alpha and beta chains form an alternating ring which encloses part of the gamma chain. F(1) is attached to F(0) by a central stalk formed by the gamma and epsilon chains, while a peripheral stalk is formed by the delta and b chains.

It is found in the cell inner membrane. In terms of biological role, f(1)F(0) ATP synthase produces ATP from ADP in the presence of a proton or sodium gradient. F-type ATPases consist of two structural domains, F(1) containing the extramembraneous catalytic core and F(0) containing the membrane proton channel, linked together by a central stalk and a peripheral stalk. During catalysis, ATP synthesis in the catalytic domain of F(1) is coupled via a rotary mechanism of the central stalk subunits to proton translocation. Functionally, key component of the F(0) channel; it plays a direct role in translocation across the membrane. A homomeric c-ring of between 10-14 subunits forms the central stalk rotor element with the F(1) delta and epsilon subunits. The chain is ATP synthase subunit c from Leptothrix cholodnii (strain ATCC 51168 / LMG 8142 / SP-6) (Leptothrix discophora (strain SP-6)).